The sequence spans 1122 residues: Receptor-type guanylate cyclase gcy-5 (1122 aa).

An N-terminal signal peptide occupies residues 1-19 (MRLLYFSMVLLWVLGASEC). Topologically, residues 20–486 (QVIPSSRRTL…CPVQFWDQYG (467 aa)) are extracellular. Residues asparagine 252, asparagine 299, asparagine 344, asparagine 350, asparagine 378, asparagine 434, and asparagine 439 are each glycosylated (N-linked (GlcNAc...) asparagine). Residues 487–507 (VLIFVASIVLIFLICIMLMCF) form a helical membrane-spanning segment. Residues 508 to 1122 (GFMIRGRRAE…KSKMDTLKVV (615 aa)) lie on the Cytoplasmic side of the membrane. The disordered stretch occupies residues 536-562 (QKEKRKPNSRRSLQSGPSTITGESKMT). Residues 542-830 (PNSRRSLQSG…NTNLMDHVFN (289 aa)) enclose the Protein kinase domain. Residues 545–559 (RRSLQSGPSTITGES) show a composition bias toward polar residues. The region spanning 888–1018 (TVLFSDVVKF…DTVNTASRME (131 aa)) is the Guanylate cyclase domain. A disordered region spans residues 1071–1122 (SDTKSLSTRTTPPITDENWPPQMKEDLKKRAVTPYPERQRSGKSKMDTLKVV). Residues 1074–1083 (KSLSTRTTPP) are compositionally biased toward polar residues. Basic and acidic residues predominate over residues 1107-1122 (ERQRSGKSKMDTLKVV).

This sequence belongs to the adenylyl cyclase class-4/guanylyl cyclase family. Expressed in both ASEL and ASER neurons during early embryonic stages and becomes specifically expressed in ASER neuron in early larval stage.

It localises to the cell membrane. The catalysed reaction is GTP = 3',5'-cyclic GMP + diphosphate. Guanylate cyclase involved in the production of the second messenger cGMP. Unlike other guanylate cyclases expressed in ASE neurons, may not play a role in chemotaxis responses to salt ions mediated by ASE sensory neurons. The sequence is that of Receptor-type guanylate cyclase gcy-5 from Caenorhabditis elegans.